Reading from the N-terminus, the 36-residue chain is Protein P4 (36 aa).

A helical membrane pass occupies residues 13–33; the sequence is GLQLSLLICACLLAVLIVSFC.

It is found in the host membrane. The protein is Protein P4 of Vitis vinifera (Grape).